Consider the following 140-residue polypeptide: Large ribosomal subunit protein uL11 (140 aa).

It belongs to the universal ribosomal protein uL11 family. As to quaternary structure, part of the ribosomal stalk of the 50S ribosomal subunit. Interacts with L10 and the large rRNA to form the base of the stalk. L10 forms an elongated spine to which L12 dimers bind in a sequential fashion forming a multimeric L10(L12)X complex. In terms of processing, one or more lysine residues are methylated.

Forms part of the ribosomal stalk which helps the ribosome interact with GTP-bound translation factors. In Gemmatimonas aurantiaca (strain DSM 14586 / JCM 11422 / NBRC 100505 / T-27), this protein is Large ribosomal subunit protein uL11.